A 242-amino-acid chain; its full sequence is N-glycosylase/DNA lyase (242 aa).

Glutamine 26, serine 53, and tryptophan 64 together coordinate 8-oxoguanine. A helix-hairpin-helix region spans residues 120 to 184 (EGYYKNMKML…EDLRIKSVTS (65 aa)). Lysine 144 (schiff-base intermediate with DNA) is an active-site residue. Positions 148 and 174 each coordinate 8-oxoguanine. The active site involves aspartate 176. Positions 210 and 214 each coordinate 8-oxoguanine.

The protein belongs to the archaeal N-glycosylase/DNA lyase (AGOG) family.

It carries out the reaction 2'-deoxyribonucleotide-(2'-deoxyribose 5'-phosphate)-2'-deoxyribonucleotide-DNA = a 3'-end 2'-deoxyribonucleotide-(2,3-dehydro-2,3-deoxyribose 5'-phosphate)-DNA + a 5'-end 5'-phospho-2'-deoxyribonucleoside-DNA + H(+). Its function is as follows. DNA repair enzyme that is part of the base excision repair (BER) pathway; protects from oxidative damage by removing the major product of DNA oxidation, 8-oxoguanine (GO), from single- and double-stranded DNA substrates. This is N-glycosylase/DNA lyase from Pyrococcus furiosus (strain ATCC 43587 / DSM 3638 / JCM 8422 / Vc1).